Here is a 243-residue protein sequence, read N- to C-terminus: Ribosomal RNA small subunit methyltransferase G (243 aa).

Residues G80, F85, 132–133, and R151 contribute to the S-adenosyl-L-methionine site; that span reads IE.

It belongs to the methyltransferase superfamily. RNA methyltransferase RsmG family.

The protein resides in the cytoplasm. Specifically methylates the N7 position of a guanine in 16S rRNA. The protein is Ribosomal RNA small subunit methyltransferase G of Synechococcus sp. (strain CC9902).